The primary structure comprises 182 residues: Ribulose bisphosphate carboxylase small subunit, chloroplastic (182 aa).

Residues 1 to 58 (MASSMLSTATVASINRVSPAQATMVAPFTGLKSTPVFPTTRKTNSDITSITSNGGKVQ) constitute a chloroplast transit peptide.

This sequence belongs to the RuBisCO small chain family. In terms of assembly, heterohexadecamer of 8 large and 8 small subunits.

The protein localises to the plastid. It is found in the chloroplast. RuBisCO catalyzes two reactions: the carboxylation of D-ribulose 1,5-bisphosphate, the primary event in carbon dioxide fixation, as well as the oxidative fragmentation of the pentose substrate. Both reactions occur simultaneously and in competition at the same active site. Although the small subunit is not catalytic it is essential for maximal activity. The sequence is that of Ribulose bisphosphate carboxylase small subunit, chloroplastic from Manihot esculenta (Cassava).